An 80-amino-acid chain; its full sequence is Acyl carrier protein (80 aa).

Positions 4–79 (DEVKGQVYDI…DAINYIVEKK (76 aa)) constitute a Carrier domain. Residue Ser39 is modified to O-(pantetheine 4'-phosphoryl)serine.

This sequence belongs to the acyl carrier protein (ACP) family. In terms of processing, 4'-phosphopantetheine is transferred from CoA to a specific serine of apo-ACP by AcpS. This modification is essential for activity because fatty acids are bound in thioester linkage to the sulfhydryl of the prosthetic group.

The protein localises to the cytoplasm. It functions in the pathway lipid metabolism; fatty acid biosynthesis. Functionally, carrier of the growing fatty acid chain in fatty acid biosynthesis. In Chloroherpeton thalassium (strain ATCC 35110 / GB-78), this protein is Acyl carrier protein.